Consider the following 714-residue polypeptide: Neutral ceramidase A (714 aa).

The first 23 residues, 1 to 23, serve as a signal peptide directing secretion; that stretch reads MKRSIVFIYSLVILLLSVGFIDA. Residues N218 and N246 are each glycosylated (N-linked (GlcNAc...) asparagine). Residue S293 is the Nucleophile of the active site. N-linked (GlcNAc...) asparagine glycosylation is found at N353, N373, N416, N571, N610, and N700.

It belongs to the neutral ceramidase family.

It is found in the secreted. The enzyme catalyses an N-acylsphing-4-enine + H2O = sphing-4-enine + a fatty acid. Its function is as follows. Hydrolyzes the sphingolipid ceramide into sphingosine and free fatty acid at an optimal pH of 3.0. Has no activity toward glycosphingolipids, such as GalCer and Galbeta1-3GalNAcbeta1-4(NeuAcalpha2-3)Galbeta1-4Glcbeta1-1'Cer or sphingomyelin. In Dictyostelium discoideum (Social amoeba), this protein is Neutral ceramidase A (dcd2A).